The sequence spans 509 residues: tRNA (guanine(37)-N(1))-methyltransferase (509 aa).

S-adenosyl-L-methionine-binding positions include H289, 327–328, 355–356, and N387; these read DL and DG. The tract at residues 478–509 is disordered; sequence TRNPENHEDPPLKRQRTAEAFSDEKTQIVSNT.

This sequence belongs to the class I-like SAM-binding methyltransferase superfamily. TRM5/TYW2 family. In terms of assembly, monomer.

The protein resides in the mitochondrion matrix. It is found in the nucleus. Its subcellular location is the cytoplasm. The catalysed reaction is guanosine(37) in tRNA + S-adenosyl-L-methionine = N(1)-methylguanosine(37) in tRNA + S-adenosyl-L-homocysteine + H(+). Its function is as follows. Involved in mitochondrial tRNA methylation. Specifically methylates the N1 position of guanosine-37 in various tRNAs. Methylation is not dependent on the nature of the nucleoside 5' of the target nucleoside. This is the first step in the biosynthesis of wybutosine (yW), a modified base adjacent to the anticodon of tRNAs and required for accurate decoding. This chain is tRNA (guanine(37)-N(1))-methyltransferase, found in Homo sapiens (Human).